Here is an 800-residue protein sequence, read N- to C-terminus: Ent-copalyl diphosphate synthase 2 (800 aa).

Residues 52 to 80 form a disordered region; it reads QGQETRERRQLDDDEHARPPQGGDDDVAA. Over residues 55-69 the composition is skewed to basic and acidic residues; the sequence is ETRERRQLDDDEHAR. Substrate is bound at residue lysine 242. Residues aspartate 374 and aspartate 376 each coordinate Mg(2+). The DXDD motif signature appears at 374-377; it reads DIDD. Lysine 461 lines the substrate pocket.

It belongs to the terpene synthase family. Mg(2+) serves as cofactor.

The catalysed reaction is (2E,6E,10E)-geranylgeranyl diphosphate = ent-copalyl diphosphate. In terms of biological role, catalyzes the conversion of geranylgeranyl diphosphate to the phytoalexin precursor ent-copalyl diphosphate. The polypeptide is Ent-copalyl diphosphate synthase 2 (CPS2) (Oryza sativa subsp. indica (Rice)).